Reading from the N-terminus, the 179-residue chain is Translation initiation factor IF-3 (179 aa).

This sequence belongs to the IF-3 family. Monomer.

Its subcellular location is the cytoplasm. IF-3 binds to the 30S ribosomal subunit and shifts the equilibrium between 70S ribosomes and their 50S and 30S subunits in favor of the free subunits, thus enhancing the availability of 30S subunits on which protein synthesis initiation begins. This is Translation initiation factor IF-3 from Buchnera aphidicola subsp. Acyrthosiphon pisum (strain APS) (Acyrthosiphon pisum symbiotic bacterium).